The chain runs to 112 residues: Signal peptidase complex-like protein DTM1 (112 aa).

Positions M1–T25 are cleaved as a signal peptide. 2 consecutive transmembrane segments (helical) span residues A33–F53 and M92–S112.

It belongs to the SPCS1 family.

Its subcellular location is the endoplasmic reticulum membrane. Functionally, functions in tapetum development during early meiosis. May play a role in the endoplasmic reticulum (ER) membrane in the early stages of tapetum development in anthers. Seems to function after MSP1 and before UDT1. In Oryza sativa subsp. japonica (Rice), this protein is Signal peptidase complex-like protein DTM1.